Reading from the N-terminus, the 324-residue chain is MAMEIGEDEWKVCCGSSEFAKQMSTSGPLTSQEAIYTARDIWFNQVNVTDWLEAFSAHPQIGNTPSPSINSDFARRSVSEQSTAFATTSASALQELAEWNVLYKKKFGFIFIICASGRTHAEMLHALKERYENRPIVELEIAAMEQMKITELRMAKLFSDKAKVISETDSSSSPVSTKPQDRLRIIGGHLNVAAEAKAPKRSRPPITTHVLDVSRGAPAAGVEVHLEVWSGTTGPSFVHGGGGVWSSVGTSATDRDGRSGPLMDLVDALNPGTYRISFDTAKYSPGCFFPYVSIVFQVTESQKWEHFHVPLLLAPFSFSTYRGS.

The residue at position 2 (Ala2) is an N-acetylalanine. The interval Ala2 to Leu29 is required for BRI1-binding. An OHCU decarboxylase region spans residues Ala2–Lys161. The Proton donor; for OHCU decarboxylase activity role is filled by His58. Positions 58, 59, 80, 111, 113, and 115 each coordinate (S)-allantoin. The HIU hydrolase stretch occupies residues Lys178–Ser324. The short motif at Arg182 to Leu190 is the Internal peroxisomal targeting signal (PTS2) element.

The protein in the N-terminal section; belongs to the OHCU decarboxylase family. This sequence in the C-terminal section; belongs to the transthyretin family. 5-hydroxyisourate hydrolase subfamily. Homodimer. Forms tetramers. Interacts with BRI1 in a kinase-dependent manner. Interacts with B1L. Post-translationally, phosphorylated by BRI1 in vitro. Expressed ubiquitously with highest levels in flowers buds and elongating inflorescences. As to expression, mainly expressed in stems and leaves, and, to a lower extent, in flowers, flower buds and seedlings. In terms of tissue distribution, strongly expressed in flower buds and leaves, to a lower extent in stems, and at low levels in seedlings and flowers.

The protein localises to the cell membrane. It is found in the peroxisome. It localises to the cytoplasm. Its subcellular location is the cytosol. It carries out the reaction 5-hydroxyisourate + H2O = 5-hydroxy-2-oxo-4-ureido-2,5-dihydro-1H-imidazole-5-carboxylate + H(+). The catalysed reaction is 5-hydroxy-2-oxo-4-ureido-2,5-dihydro-1H-imidazole-5-carboxylate + H(+) = (S)-allantoin + CO2. It participates in purine metabolism; urate degradation; (S)-allantoin from urate: step 2/3. It functions in the pathway purine metabolism; urate degradation; (S)-allantoin from urate: step 3/3. Functionally, involved in the last two steps of the degradation of uric acid, i.e. the hydrolysis of 5-hydroxyisourate (HIU) to 2-oxo-4-hydroxy-4-carboxy-5-ureidoimidazoline (OHCU) and its stereoselective decarboxylation to (S)-allantoin, a major ureide compound. Might function as a negative regulator to modulate brassinosteroid-mediated plant growth. Together with B1L, prevents plant growth and development, but by opposition to B1L, negatively regulates cold tolerance, probably in a brassinosteroid (BR) and allantoin-dependent manner. The sequence is that of Uric acid degradation bifunctional protein TTL from Arabidopsis thaliana (Mouse-ear cress).